We begin with the raw amino-acid sequence, 61 residues long: Adipokinetic prohormone type 2 (61 aa).

The first 22 residues, methionine 1–alanine 22, serve as a signal peptide directing secretion. Glutamine 23 is subject to Pyrrolidone carboxylic acid. At tryptophan 30 the chain carries Tryptophan amide.

This sequence belongs to the AKH/HRTH/RPCH family. As to quaternary structure, adipokinetic hormone precursor-related peptide (APRP) can form three type of disulfide-bond dimers: p1 (alpha-alpha), p2 (alpha-beta), and p3 (beta-beta).

Its subcellular location is the secreted. Its function is as follows. This hormone, released from cells in the corpora cardiaca, causes release of diglycerides from the fat body and stimulation of muscles to use these diglycerides as an energy source during energy-demanding processes. This chain is Adipokinetic prohormone type 2, found in Schistocerca nitens (Vagrant locust).